An 80-amino-acid polypeptide reads, in one-letter code: Serine protease inhibitor Kazal-type 1 (80 aa).

A signal peptide spans 1–23 (MKVAVIFLLSALALLSLAGNTFS). Residues 27 to 80 (TGKEASCHDAVAGCPRIYDPVCGTDGITYANECVLCFENRKRIEPVLIRKGGPC) enclose the Kazal-like domain. Disulfide bonds link Cys33–Cys62, Cys40–Cys59, and Cys48–Cys80.

As to expression, in the genital tract, expressed only in male accessory glands including seminal vesicle, coagulating gland and prostate.

Its subcellular location is the secreted. Functionally, serine protease inhibitor which exhibits anti-trypsin activity. In the pancreas, protects against trypsin-catalyzed premature activation of zymogens. Its function is as follows. In the male reproductive tract, binds to sperm heads where it modulates sperm capacitance by inhibiting calcium uptake and nitrogen oxide (NO) production. This chain is Serine protease inhibitor Kazal-type 1, found in Mus musculus (Mouse).